A 261-amino-acid polypeptide reads, in one-letter code: Cytochrome c oxidase subunit 3 (261 aa).

Residues 1-15 (MTHQTHAYHMVNPSP) lie on the Mitochondrial matrix side of the membrane. The helical transmembrane segment at 16–34 (WPLTGALSALLMTSGLVMW) threads the bilayer. Topologically, residues 35–40 (FHYNST) are mitochondrial intermembrane. The helical transmembrane segment at 41-66 (LLLTLGLTTNLLTMYQWWRDIIREST) threads the bilayer. Residues 67–72 (FQGHHT) lie on the Mitochondrial matrix side of the membrane. A helical membrane pass occupies residues 73–105 (PAVQKGLRYGMILFIISEVFFFSGFFWAFYHSS). The Mitochondrial intermembrane segment spans residues 106–128 (LAPTPELGGCWPPTGIHPLNPME). The helical transmembrane segment at 129–152 (VPLLNTSVLLASGVSITWAHHSLM) threads the bilayer. Residues 153 to 155 (EGN) are Mitochondrial matrix-facing. A helical membrane pass occupies residues 156–183 (RKHMLQALFITISLGIYFTLLQASEYYE). The Mitochondrial intermembrane portion of the chain corresponds to 184–190 (APFTISD). Residues 191 to 223 (GVYGSTFFVATGFHGLHVIIGSTFLIVCFLRQL) form a helical membrane-spanning segment. Topologically, residues 224–232 (KFHFTSNHH) are mitochondrial matrix. The chain crosses the membrane as a helical span at residues 233–256 (FGFEAAAWYWHFVDVVWLFLYVSI). The Mitochondrial intermembrane segment spans residues 257–261 (YWWGS).

It belongs to the cytochrome c oxidase subunit 3 family. In terms of assembly, component of the cytochrome c oxidase (complex IV, CIV), a multisubunit enzyme composed of 14 subunits. The complex is composed of a catalytic core of 3 subunits MT-CO1, MT-CO2 and MT-CO3, encoded in the mitochondrial DNA, and 11 supernumerary subunits COX4I, COX5A, COX5B, COX6A, COX6B, COX6C, COX7A, COX7B, COX7C, COX8 and NDUFA4, which are encoded in the nuclear genome. The complex exists as a monomer or a dimer and forms supercomplexes (SCs) in the inner mitochondrial membrane with NADH-ubiquinone oxidoreductase (complex I, CI) and ubiquinol-cytochrome c oxidoreductase (cytochrome b-c1 complex, complex III, CIII), resulting in different assemblies (supercomplex SCI(1)III(2)IV(1) and megacomplex MCI(2)III(2)IV(2)).

The protein resides in the mitochondrion inner membrane. The catalysed reaction is 4 Fe(II)-[cytochrome c] + O2 + 8 H(+)(in) = 4 Fe(III)-[cytochrome c] + 2 H2O + 4 H(+)(out). Its function is as follows. Component of the cytochrome c oxidase, the last enzyme in the mitochondrial electron transport chain which drives oxidative phosphorylation. The respiratory chain contains 3 multisubunit complexes succinate dehydrogenase (complex II, CII), ubiquinol-cytochrome c oxidoreductase (cytochrome b-c1 complex, complex III, CIII) and cytochrome c oxidase (complex IV, CIV), that cooperate to transfer electrons derived from NADH and succinate to molecular oxygen, creating an electrochemical gradient over the inner membrane that drives transmembrane transport and the ATP synthase. Cytochrome c oxidase is the component of the respiratory chain that catalyzes the reduction of oxygen to water. Electrons originating from reduced cytochrome c in the intermembrane space (IMS) are transferred via the dinuclear copper A center (CU(A)) of subunit 2 and heme A of subunit 1 to the active site in subunit 1, a binuclear center (BNC) formed by heme A3 and copper B (CU(B)). The BNC reduces molecular oxygen to 2 water molecules using 4 electrons from cytochrome c in the IMS and 4 protons from the mitochondrial matrix. This chain is Cytochrome c oxidase subunit 3 (MT-CO3), found in Rhinoceros unicornis (Greater Indian rhinoceros).